We begin with the raw amino-acid sequence, 462 residues long: Metacaspase-1 (462 aa).

Over residues 1-21 (MSYYPPPSGYPGGPPAYPPPQ) the composition is skewed to pro residues. The segment at 1-150 (MSYYPPPSGY…PPPPSGSVAF (150 aa)) is disordered. Positions 22–33 (QQQQQQQQYPSY) are enriched in low complexity. Pro residues-rich tracts occupy residues 49-69 (PSYPPPGQYGHPPQPGYPPHS) and 77-102 (SPQPPYGHPPPQHPPHQPPHRPPPSP). Residues histidine 253 and cysteine 309 contribute to the active site.

The protein belongs to the peptidase C14B family.

Its function is as follows. Involved in cell death (apoptosis). The sequence is that of Metacaspase-1 (MCA1) from Coccidioides immitis (strain RS) (Valley fever fungus).